Consider the following 350-residue polypeptide: Meiotic driver wtf30 (350 aa).

The interval 1 to 92 is disordered; it reads MKNKYYPLRS…RENHSSGTTD (92 aa). A compositionally biased stretch (basic and acidic residues) spans 11-29; sequence SIDELSTKNDNEIDLEKGP. The segment covering 57 to 72 has biased composition (polar residues); the sequence is GANNPNLFNTDESTTP. The next 7 membrane-spanning stretches (helical) occupy residues 97–117, 134–154, 165–185, 190–210, 226–246, 253–273, and 280–300; these read FLIK…PAVC, WVYF…LWCF, CVKV…IGLF, EMMI…FVYI, CTIS…FWTF, LAKV…TMFL, and WTGC…LFLC.

It belongs to the WTF family. As to quaternary structure, homomer. Forms protein aggregates. The two isoforms can interact with each other and with themselves. High sequence similarity is required for their interaction.

Its subcellular location is the spore membrane. The protein resides in the vacuole membrane. It is found in the ascus epiplasm. The protein localises to the cytoplasm. It localises to the endoplasmic reticulum membrane. Its function is as follows. Promotes unequal transmission of alleles from the parental zygote to progeny spores by acting as poison/antidote system where the poison and antidote proteins are produced from the same locus; the poison component is trans-acting and targets all spores within an ascus whereas the antidote component is spore-specific, leading to poisoning of all progeny that do not inherit the allele. Localizes isoform 2 to the vacuole thereby facilitating its degradation. In terms of biological role, forms toxic aggregates that disrupt spore maturation. In Schizosaccharomyces kambucha (Fission yeast), this protein is Meiotic driver wtf30.